A 769-amino-acid polypeptide reads, in one-letter code: Serine/threonine-protein kinase PLK4 (769 aa).

The Protein kinase domain maps to 10–263; it reads YEVYEILGKG…LDQVLQHPFM (254 aa). ATP is bound by residues 16–24 and Lys39; that span reads LGKGGFASV. Asp134 acts as the Proton acceptor in catalysis. 3 disordered regions span residues 280–304, 337–380, and 592–651; these read SSDS…SSYG, PQQR…LDIP, and APLT…VLSS. Residues 337–371 show a composition bias toward polar residues; the sequence is PQQRPQSASHNKPTSDFFSGISNDPRTMAPSSPTK. The Cryptic POLO box 1 (CPB1) domain maps to 374 to 491; the sequence is KKRLDIPPLN…ARFVQMVKAK (118 aa). The Cryptic POLO box 2 (CPB2) domain maps to 492-595; the sequence is TPKITYYSEK…GRRPANAPLT (104 aa). The segment covering 605–648 has biased composition (polar residues); sequence TKENQLYSNISSPNTPQTPHQMPSFAMSTASHTSAGNPLTQRPV. Positions 662 to 745 constitute a POLO box domain; the sequence is AMKKCTIAGV…MPAILRELNA (84 aa).

This sequence belongs to the protein kinase superfamily. Ser/Thr protein kinase family. CDC5/Polo subfamily. Homodimer. Post-translationally, ubiquitinated; leading to its degradation by the proteasome.

The protein resides in the cytoplasm. The protein localises to the cytoskeleton. Its subcellular location is the microtubule organizing center. It localises to the centrosome. It is found in the centriole. The enzyme catalyses L-seryl-[protein] + ATP = O-phospho-L-seryl-[protein] + ADP + H(+). It carries out the reaction L-threonyl-[protein] + ATP = O-phospho-L-threonyl-[protein] + ADP + H(+). Its function is as follows. Serine/threonine-protein kinase that plays a central role in centriole duplication. Able to trigger procentriole formation on the surface of the mother centriole cylinder, leading to the recruitment of centriole biogenesis proteins. When overexpressed, it is able to induce centrosome amplification through the simultaneous generation of multiple procentrioles adjoining each parental centriole during S phase. The sequence is that of Serine/threonine-protein kinase PLK4 (SAK) from Aedes aegypti (Yellowfever mosquito).